The chain runs to 379 residues: Multicilin (379 aa).

Disordered regions lie at residues 26–46 (SRRSLGKPGKPERKFVPPWKS) and 87–106 (LLGTEAPPSGDSPASQNPSL). Positions 175–223 (EQYWKEVADQNQRALGTALIENNQLHVTLTQKQEEIASLRERNVQLKEL) form a coiled coil. Basic and acidic residues predominate over residues 289–309 (LQNRDPKRPRLQQEPDSKDCS). The interval 289–311 (LQNRDPKRPRLQQEPDSKDCSTR) is disordered.

This sequence belongs to the geminin family. As to quaternary structure, heterodimer (via coiled-coil domain) with GMNN (via coiled-coil domain); targets GMNN to the nucleus. Can form homodimers (in vitro, via coiled-coil domain), but these are much less stable than the heterodimer formed with GMNN.

The protein localises to the nucleus. Transcription regulator specifically required for multiciliate cell differentiation. Acts in a multiprotein complex containing E2F4 and E2F5 that binds and activates genes required for centriole biogenesis. Required for the deuterosome-mediated acentriolar pathway. Plays a role in mitotic cell cycle progression by promoting cell cycle exit. Modulates GMNN activity by reducing its affinity for CDT1. This is Multicilin (Mcidas) from Rattus norvegicus (Rat).